A 432-amino-acid chain; its full sequence is Sensor histidine kinase YrkQ (432 aa).

Residues 1–12 lie on the Cytoplasmic side of the membrane; that stretch reads MAHLKFTLTKKL. The helical transmembrane segment at 13–33 threads the bilayer; that stretch reads ALLIMVAAIVSGVIFLTLQKI. Over 34 to 145 the chain is Extracellular; that stretch reads TDDLIEGYLS…GFYSSRYYDL (112 aa). A helical transmembrane segment spans residues 146–166; the sequence is AFALDLLGATLIFLIIVLFGI. The HAMP domain occupies 167–219; that stretch reads RQSLRYLKTIHQEIHILEGGELDYEMTIKGHDELAMIAKSIEDLRKAFLDKLK. Topologically, residues 167–432 are cytoplasmic; the sequence is RQSLRYLKTI…IVLRFWNTKM (266 aa). The Histidine kinase domain maps to 234–432; the sequence is EMSHDMRTPL…IVLRFWNTKM (199 aa). Residue His237 is modified to Phosphohistidine; by autocatalysis.

The protein resides in the cell membrane. The catalysed reaction is ATP + protein L-histidine = ADP + protein N-phospho-L-histidine.. Its function is as follows. Member of the two-component regulatory system YrkQ/YrkP. Probably activates YrkP by phosphorylation. This chain is Sensor histidine kinase YrkQ (yrkQ), found in Bacillus subtilis (strain 168).